Here is a 497-residue protein sequence, read N- to C-terminus: Signal recognition particle receptor FtsY (497 aa).

Disordered regions lie at residues 1–63 (MAKE…TEAE) and 79–130 (AESE…EWQA). The segment covering 87–96 (EAEVVAQPEP) has biased composition (low complexity). GTP is bound by residues 300–307 (GVNGVGKT), 382–386 (DTAGR), and 446–449 (TKLD).

The protein belongs to the GTP-binding SRP family. FtsY subfamily. Part of the signal recognition particle protein translocation system, which is composed of SRP and FtsY. SRP is a ribonucleoprotein composed of Ffh and a 4.5S RNA molecule. Binds to SecY. Proteolytically cleaved. The cleavage may regulate function and subcellular location of FtsY. Full-length FtsY is found primarily associated with the membrane, while cleaved protein is predominantly present in the cytoplasm.

Its subcellular location is the cell inner membrane. It is found in the cytoplasm. It carries out the reaction GTP + H2O = GDP + phosphate + H(+). Its activity is regulated as follows. Conformation of the Ffh-FtsY complex and regulation of its GTPase activity are modulated by the 4.5S RNA. Formation of the FfH-FtsY complex leads to a mutual stimulation of both GTPases. Functionally, involved in targeting and insertion of nascent membrane proteins into the cytoplasmic membrane. Acts as a receptor for the complex formed by the signal recognition particle (SRP) and the ribosome-nascent chain (RNC). Interaction with SRP-RNC leads to the transfer of the RNC complex to the Sec translocase for insertion into the membrane, the hydrolysis of GTP by both Ffh and FtsY, and the dissociation of the SRP-FtsY complex into the individual components. The protein is Signal recognition particle receptor FtsY of Escherichia coli (strain K12).